The primary structure comprises 87 residues: Large ribosomal subunit protein bL27 (87 aa).

The disordered stretch occupies residues 1–21 (MAHKKAGGSSRNGRDSESKRL).

This sequence belongs to the bacterial ribosomal protein bL27 family.

The sequence is that of Large ribosomal subunit protein bL27 from Burkholderia ambifaria (strain MC40-6).